An 805-amino-acid polypeptide reads, in one-letter code: Sucrose synthase 1 (805 aa).

Positions 274 to 751 are GT-B glycosyltransferase; the sequence is MVFNVVILSP…GLQRIYEKYT (478 aa).

Belongs to the glycosyltransferase 1 family. Plant sucrose synthase subfamily.

The catalysed reaction is an NDP-alpha-D-glucose + D-fructose = a ribonucleoside 5'-diphosphate + sucrose + H(+). In terms of biological role, sucrose-cleaving enzyme that provides UDP-glucose and fructose for various metabolic pathways. This is Sucrose synthase 1 from Tulipa gesneriana (Garden tulip).